A 385-amino-acid chain; its full sequence is Probable nitrate transporter NarT (385 aa).

12 consecutive transmembrane segments (helical) span residues 14–34 (TLSLVVGFMAWSIISPLMPYI), 47–67 (IILAIPVILGSILRVPFGYLT), 69–89 (IIGAKWVFFCSFVILLFPIFF), 97–117 (GMLMLSGFFLGVGGAIFSVGV), 139–159 (GNIGTAVSSFLAPPIAGIIGW), 161–181 (TTVRSYLIIIAIFAILMFIFG), 205–225 (LYYLSLWYFITFGAFVAFGLF), 246–266 (GVFIALATFLRPIGGILGDKF), 277–297 (IIMIVGAVILGISSHIALFTI), 302–322 (ISICAGLGNGLIFKLVPSYFA), 330–350 (GIVSMMGGLGGFFPPLVITYV), and 359–379 (LAFILLAIFGVLAFITMGHLY).

Belongs to the major facilitator superfamily. Nitrate/nitrite porter (TC 2.A.1.8) family.

It localises to the cell membrane. Its function is as follows. Probably required for nitrate uptake under anoxic conditions. Also possibly involved in excretion of nitrite produced by the dissimilatory reduction of nitrate. The sequence is that of Probable nitrate transporter NarT (narT) from Staphylococcus haemolyticus (strain JCSC1435).